We begin with the raw amino-acid sequence, 141 residues long: Galactose-6-phosphate isomerase subunit LacA (141 aa).

The protein belongs to the LacAB/RpiB family. In terms of assembly, heteromultimeric protein consisting of LacA and LacB.

It carries out the reaction aldehydo-D-galactose 6-phosphate = keto-D-tagatose 6-phosphate. Its pathway is carbohydrate metabolism; D-galactose 6-phosphate degradation; D-tagatose 6-phosphate from D-galactose 6-phosphate: step 1/1. The polypeptide is Galactose-6-phosphate isomerase subunit LacA (Streptococcus equi subsp. equi (strain 4047)).